The sequence spans 471 residues: Tryptophanase (471 aa).

Lys-5, Lys-115, and Lys-156 each carry N6-acetyllysine. N6-(pyridoxal phosphate)lysine is present on Lys-270. Lys-450 is modified (N6-acetyllysine).

The protein belongs to the beta-eliminating lyase family. Homotetramer. It depends on pyridoxal 5'-phosphate as a cofactor.

The catalysed reaction is L-tryptophan + H2O = indole + pyruvate + NH4(+). Its pathway is amino-acid degradation; L-tryptophan degradation via pyruvate pathway; indole and pyruvate from L-tryptophan: step 1/1. The polypeptide is Tryptophanase (Escherichia coli (strain SMS-3-5 / SECEC)).